The chain runs to 199 residues: Mediator of RNA polymerase II transcription subunit 29 (199 aa).

Residues 1–17 (MAAPQPQAAAVSSASGV) are compositionally biased toward low complexity. Positions 1-47 (MAAPQPQAAAVSSASGVSGPGSAGGPGPQQQPQPTQLVGSAQSGLLQ) are disordered. Ala2 carries the N-acetylalanine modification. The segment covering 18–27 (SGPGSAGGPG) has biased composition (gly residues). Residues 28-47 (PQQQPQPTQLVGSAQSGLLQ) show a composition bias toward low complexity.

This sequence belongs to the Mediator complex subunit 29 family. As to quaternary structure, component of the Mediator complex, which is composed of MED1, MED4, MED6, MED7, MED8, MED9, MED10, MED11, MED12, MED13, MED13L, MED14, MED15, MED16, MED17, MED18, MED19, MED20, MED21, MED22, MED23, MED24, MED25, MED26, MED27, MED29, MED30, MED31, CCNC, CDK8 and CDC2L6/CDK11. The MED12, MED13, CCNC and CDK8 subunits form a distinct module termed the CDK8 module. Mediator containing the CDK8 module is less active than Mediator lacking this module in supporting transcriptional activation. Individual preparations of the Mediator complex lacking one or more distinct subunits have been variously termed ARC, CRSP, DRIP, PC2, SMCC and TRAP. Associates with the MED18/MED20 heteromer.

The protein localises to the nucleus. In terms of biological role, component of the Mediator complex, a coactivator involved in the regulated transcription of nearly all RNA polymerase II-dependent genes. Mediator functions as a bridge to convey information from gene-specific regulatory proteins to the basal RNA polymerase II transcription machinery. Mediator is recruited to promoters by direct interactions with regulatory proteins and serves as a scaffold for the assembly of a functional preinitiation complex with RNA polymerase II and the general transcription factors. The chain is Mediator of RNA polymerase II transcription subunit 29 (Med29) from Mus musculus (Mouse).